The primary structure comprises 824 residues: A-adding tRNA nucleotidyltransferase (824 aa).

CBS domains follow at residues 305 to 363 and 367 to 423; these read MNTP…DEPI and VNRD…LEKL. ATP is bound at residue 459-462; that stretch reads GVVR. Mg(2+)-binding residues include aspartate 472 and aspartate 474. Residues 545 to 546, asparagine 550, 590 to 599, arginine 603, and arginine 632 contribute to the ATP site; these read RD and DPVRILRALR.

It belongs to the tRNA nucleotidyltransferase/poly(A) polymerase family. It depends on Mg(2+) as a cofactor.

It catalyses the reaction a tRNA with a 3' CC end + ATP = a tRNA with a 3' CCA end + diphosphate. Its function is as follows. tRNA nucleotidyltransferase involved in the synthesis of the tRNA CCA terminus. Adds the terminal adenosine residue to tRNA. Can incorporate CMP into tRNA ending with C74C75 (tRNACC), with very weak efficiency. This Aquifex aeolicus (strain VF5) protein is A-adding tRNA nucleotidyltransferase.